The following is a 641-amino-acid chain: Chaperone protein DnaK (641 aa).

Residue Thr-199 is modified to Phosphothreonine; by autocatalysis. The span at 577–590 (KGDNKDEIETRTQK) shows a compositional bias: basic and acidic residues. Positions 577–641 (KGDNKDEIET…EFEEVDDKKK (65 aa)) are disordered. Low complexity predominate over residues 617–626 (GAEQASAQQD). The span at 627-641 (DVVDAEFEEVDDKKK) shows a compositional bias: acidic residues.

It belongs to the heat shock protein 70 family.

In terms of biological role, acts as a chaperone. This Thioalkalivibrio sulfidiphilus (strain HL-EbGR7) protein is Chaperone protein DnaK.